The following is a 363-amino-acid chain: Chorismate synthase (363 aa).

An NADP(+)-binding site is contributed by Arg48. FMN-binding positions include 125–127, 238–239, Gly278, 293–297, and Arg319; these read RSS, NA, and KPTAS.

This sequence belongs to the chorismate synthase family. In terms of assembly, homotetramer. It depends on FMNH2 as a cofactor.

It catalyses the reaction 5-O-(1-carboxyvinyl)-3-phosphoshikimate = chorismate + phosphate. It functions in the pathway metabolic intermediate biosynthesis; chorismate biosynthesis; chorismate from D-erythrose 4-phosphate and phosphoenolpyruvate: step 7/7. Catalyzes the anti-1,4-elimination of the C-3 phosphate and the C-6 proR hydrogen from 5-enolpyruvylshikimate-3-phosphate (EPSP) to yield chorismate, which is the branch point compound that serves as the starting substrate for the three terminal pathways of aromatic amino acid biosynthesis. This reaction introduces a second double bond into the aromatic ring system. This is Chorismate synthase from Acinetobacter baumannii (strain ACICU).